The primary structure comprises 245 residues: Uridylate kinase (245 aa).

12 to 15 is a binding site for ATP; that stretch reads KISG. Residue Gly55 participates in UMP binding. Positions 56 and 60 each coordinate ATP. Residues Asp76 and 137–144 contribute to the UMP site; that span reads AGAPYLTT. ATP-binding residues include Thr164, Tyr171, and Asp174.

This sequence belongs to the UMP kinase family. As to quaternary structure, homohexamer.

The protein localises to the cytoplasm. The enzyme catalyses UMP + ATP = UDP + ADP. The protein operates within pyrimidine metabolism; CTP biosynthesis via de novo pathway; UDP from UMP (UMPK route): step 1/1. Inhibited by UTP. Catalyzes the reversible phosphorylation of UMP to UDP. The sequence is that of Uridylate kinase from Chlamydia trachomatis serovar D (strain ATCC VR-885 / DSM 19411 / UW-3/Cx).